Here is a 461-residue protein sequence, read N- to C-terminus: Putative long chain fatty acid-CoA ligase VraA (461 aa).

This sequence belongs to the ATP-dependent AMP-binding enzyme family.

In Staphylococcus haemolyticus (strain JCSC1435), this protein is Putative long chain fatty acid-CoA ligase VraA (vraA).